A 465-amino-acid chain; its full sequence is Cyclin-A1 (465 aa).

This sequence belongs to the cyclin family. Cyclin AB subfamily. As to quaternary structure, interacts with the CDK2 and the CDC2 protein kinases to form a serine/threonine kinase holoenzyme complex. The cyclin subunit imparts substrate specificity to the complex. Does not bind CDK4 and CDK5 (in vitro). The cyclin A1-CDK2 complex interacts with transcription factor E2F-1 and RB proteins. Found in a complex with CDK2, CABLES1 and CCNE1. Interacts with INCA1. Interacts with KLHDC9. Polyubiquitinated via 'Lys-11'-linked ubiquitin by the anaphase-promoting complex (APC/C), leading to its degradation by the proteasome. Deubiquitinated and stabilized by USP37 enables entry into S phase. Ubiquitinated during the G1 phase by the SCF(FBXO31) complex, leading to its proteasomal degradation. As to expression, very high levels in testis and very low levels in brain. Also found in myeloid leukemia cell lines.

The protein resides in the nucleus. May be involved in the control of the cell cycle at the G1/S (start) and G2/M (mitosis) transitions. May primarily function in the control of the germline meiotic cell cycle and additionally in the control of mitotic cell cycle in some somatic cells. The polypeptide is Cyclin-A1 (CCNA1) (Homo sapiens (Human)).